The chain runs to 283 residues: DegV domain-containing protein CPE0304 (283 aa).

The 279-residue stretch at 3–281 (VKVITDSTSC…VKSVGIAYAR (279 aa)) folds into the DegV domain. Hexadecanoate-binding residues include S60 and S92.

In terms of biological role, may bind long-chain fatty acids, such as palmitate, and may play a role in lipid transport or fatty acid metabolism. The polypeptide is DegV domain-containing protein CPE0304 (Clostridium perfringens (strain 13 / Type A)).